We begin with the raw amino-acid sequence, 492 residues long: 3,6-anhydro-alpha-L-galactose dehydrogenase (492 aa).

Residues 160-161 (WN), 184-187 (KPSE), and 237-238 (GS) each bind NADP(+). Glutamate 259 serves as the catalytic Proton acceptor. Leucine 260 provides a ligand contact to NADP(+). The Nucleophile role is filled by cysteine 293. Residue glutamate 394 participates in NADP(+) binding.

It belongs to the aldehyde dehydrogenase family.

The catalysed reaction is 3,6-anhydro-alpha-L-galactopyranose + NADP(+) + H2O = 3,6-anhydro-L-galactonate + NADPH + 2 H(+). With respect to regulation, significantly inhibited by EDTA. Activity is enhanced by Fe(2+), but is strongly inhibited by Mn(2+), Cu(2+), Zn(2+), Ni(2+) and Co(2+). In terms of biological role, involved in the degradation of 3,6-anhydro-L-galactose, which is the major monomeric sugar of red macroalgae. Catalyzes the oxidation of 3,6-anhydro-L-galactose (AHG) to form 3,6-anhydrogalactonate (AHGA). Shows broad substrate specificity, with maximum activity toward AHG. The enzyme activities toward D-fructose, D-galactose and D-ribose are between 40% and 50% of the maximum, but those toward L-rhamnose, L-glyceraldehyde, D-glyceraldehyde, L-fucose and D-glucose are much lower. The polypeptide is 3,6-anhydro-alpha-L-galactose dehydrogenase (Streptomyces coelicolor (strain ATCC BAA-471 / A3(2) / M145)).